A 348-amino-acid chain; its full sequence is Phenylalanine--tRNA ligase alpha subunit (348 aa).

A Mg(2+)-binding site is contributed by E259.

This sequence belongs to the class-II aminoacyl-tRNA synthetase family. Phe-tRNA synthetase alpha subunit type 1 subfamily. In terms of assembly, tetramer of two alpha and two beta subunits. Mg(2+) serves as cofactor.

It is found in the cytoplasm. It carries out the reaction tRNA(Phe) + L-phenylalanine + ATP = L-phenylalanyl-tRNA(Phe) + AMP + diphosphate + H(+). This Lacticaseibacillus casei (strain BL23) (Lactobacillus casei) protein is Phenylalanine--tRNA ligase alpha subunit.